Consider the following 511-residue polypeptide: 2,3-bisphosphoglycerate-independent phosphoglycerate mutase (511 aa).

Mn(2+) contacts are provided by D14 and S64. The active-site Phosphoserine intermediate is S64. Substrate contacts are provided by residues H125, 155–156 (RD), R187, R193, 259–262 (RADR), and K333. Mn(2+)-binding residues include D400, H404, D441, H442, and H460.

This sequence belongs to the BPG-independent phosphoglycerate mutase family. Monomer. Requires Mn(2+) as cofactor.

It carries out the reaction (2R)-2-phosphoglycerate = (2R)-3-phosphoglycerate. The protein operates within carbohydrate degradation; glycolysis; pyruvate from D-glyceraldehyde 3-phosphate: step 3/5. Its function is as follows. Catalyzes the interconversion of 2-phosphoglycerate and 3-phosphoglycerate. In Pseudomonas entomophila (strain L48), this protein is 2,3-bisphosphoglycerate-independent phosphoglycerate mutase.